The primary structure comprises 449 residues: Asparagine--tRNA ligase (449 aa).

This sequence belongs to the class-II aminoacyl-tRNA synthetase family. Homodimer.

Its subcellular location is the cytoplasm. The catalysed reaction is tRNA(Asn) + L-asparagine + ATP = L-asparaginyl-tRNA(Asn) + AMP + diphosphate + H(+). The chain is Asparagine--tRNA ligase from Desulfotalea psychrophila (strain LSv54 / DSM 12343).